We begin with the raw amino-acid sequence, 305 residues long: Tetraspanin-12 (305 aa).

The Cytoplasmic segment spans residues 1 to 12; the sequence is MAREDSVKCLRC. 2 S-palmitoyl cysteine lipidation sites follow: C9 and C12. Residues 13-33 form a helical membrane-spanning segment; that stretch reads LLYALNLLFWLMSISVLAVSA. Over 34 to 59 the chain is Extracellular; it reads WMRDYLNNVLTLTAETRVEEAVILTY. A helical transmembrane segment spans residues 60–80; that stretch reads FPVVHPVMIAVCCFLIIVGML. Over 81–89 the chain is Cytoplasmic; that stretch reads GYCGTVKRN. A lipid anchor (S-palmitoyl cysteine) is attached at C83. A helical membrane pass occupies residues 90-110; sequence LLLLAWYFGTLLVIFCVELAC. The Extracellular portion of the chain corresponds to 111-224; the sequence is GVWTYEQEVM…RGTKQLQVLR (114 aa). A helical transmembrane segment spans residues 225–245; it reads FLGISIGVTQILAMILTITLL. The Cytoplasmic portion of the chain corresponds to 246–305; it reads WALYYDRREPGTDQMLSLKNDTSQHLSCHSVELLKPSLSRIFEHTSMANSFNTHFEMEEL.

Belongs to the tetraspanin (TM4SF) family. In terms of assembly, interacts (when palmitoylated) with ADAM10. Interacts with MMP14/MT1-MMP. Component of a complex, at least composed of TSPAN12, FZD4 and norrin (NDP). In terms of processing, palmitoylated; required for interaction with ADAM10. As to expression, expressed in the neonatal retinal vasculature but not other retinal tissues. Also detected in the neonatal meningeal vasculature and in nonvascular cell types, such as the smooth muscle cells in the neonatal intestine.

It is found in the cell membrane. Functionally, regulator of cell surface receptor signal transduction. Acts as a regulator of membrane proteinases such as ADAM10 and MMP14/MT1-MMP. Activates ADAM10-dependent cleavage activity of amyloid precursor protein (APP). Activates MMP14/MT1-MMP-dependent cleavage activity. Plays a central role in retinal vascularization by regulating norrin (NDP) signal transduction. Acts in concert with norrin (NDP) to promote FZD4 multimerization and subsequent activation of FZD4, leading to promote accumulation of beta-catenin (CTNNB1) and stimulate LEF/TCF-mediated transcriptional programs. Suprisingly, it only activate the norrin (NDP)-dependent activation of FZD4, while it does not activate the Wnt-dependent activation of FZD4, suggesting the existence of a Wnt-independent signaling that also promote accumulation the beta-catenin (CTNNB1). In Mus musculus (Mouse), this protein is Tetraspanin-12 (Tspan12).